The sequence spans 277 residues: Xyloglucan endotransglucosylase/hydrolase protein 19 (277 aa).

The N-terminal stretch at 1–21 (MKSFTFLILFLFAAQSISVYA) is a signal peptide. The GH16 domain maps to 22–213 (GSFHKDVKIH…WSKAPFTAYY (192 aa)). Glu99 serves as the catalytic Nucleophile. Glu103 functions as the Proton donor in the catalytic mechanism. Glu103 lines the xyloglucan pocket. Asn107 is a glycosylation site (N-linked (GlcNAc...) asparagine). Residues 116–118 (HTN), 126–128 (DKE), 192–193 (HW), and Gly197 each bind xyloglucan. Disulfide bonds link Cys221–Cys230 and Cys262–Cys276. Arg267 contributes to the xyloglucan binding site.

The protein belongs to the glycosyl hydrolase 16 family. XTH group 2 subfamily. Contains at least one intrachain disulfide bond essential for its enzymatic activity. As to expression, root specific.

Its subcellular location is the secreted. The protein resides in the cell wall. It localises to the extracellular space. It is found in the apoplast. It catalyses the reaction breaks a beta-(1-&gt;4) bond in the backbone of a xyloglucan and transfers the xyloglucanyl segment on to O-4 of the non-reducing terminal glucose residue of an acceptor, which can be a xyloglucan or an oligosaccharide of xyloglucan.. Its function is as follows. Possesses xyloglucan endotransglucosylase (XET) activity in vitro. Does not possess xyloglucan endohydrolysis (XEH) activity. Cleaves and religates xyloglucan polymers, an essential constituent of the primary cell wall, and thereby participates in cell wall construction of growing tissues. Involved in cell proliferation in the tissue reunion process of wounded inflorescence stems. Maybe a downstream target of NAC071 as a consequence of auxin action in wounded stems. In Arabidopsis thaliana (Mouse-ear cress), this protein is Xyloglucan endotransglucosylase/hydrolase protein 19.